The following is a 446-amino-acid chain: Putrescine N-hydroxylase (446 aa).

FAD contacts are provided by F17, D37, S38, K39, W44, and H45. Positions 54, 56, and 98 each coordinate NADP(+). FAD is bound at residue Q56. Residue V121 coordinates FAD. Residues S199, K223, Y267, and L301 each contribute to the NADP(+) site. FAD is bound by residues N378, P389, and L391.

This sequence belongs to the lysine N(6)-hydroxylase/L-ornithine N(5)-oxygenase family. As to quaternary structure, homotetramer. FAD serves as cofactor.

It catalyses the reaction putrescine + NADPH + O2 = N-hydroxyputrescine + NADP(+) + H2O. It participates in siderophore biosynthesis. N-hydroxylating monooxygenase involved in the biosynthesis of fimsbactin A, the major siderophore produced by A.baumannii. Catalyzes the N-hydroxylation of the aliphatic diamine putrescine into N-hydroxyputrescine (NHP). Putrescine is the preferred substrate, but the enzyme can also catalyze the N-hydroxylation of cadaverine, with 4-fold lower catalytic efficiency. Cannot use lysine or ornithine as substrates. Uses both NADPH and NADH as the reducing cofactor with a preference for NADPH. The polypeptide is Putrescine N-hydroxylase (Acinetobacter baumannii (strain ATCC 17978 / DSM 105126 / CIP 53.77 / LMG 1025 / NCDC KC755 / 5377)).